The sequence spans 150 residues: Galactose-binding lectin (150 aa).

Residues H16 and G19 each contribute to the D-galactose site. N-linked (GlcNAc...) asparagine glycosylation is present at N26. Residues N27, 35-37, H64, and G67 contribute to the D-galactose site; that span reads DIH. A glycan (N-linked (GlcNAc...) asparagine) is linked at N74. D-galactose is bound by residues E75, 83 to 85, H108, and G111; that span reads DRH. An N-linked (GlcNAc...) asparagine glycan is attached at N118. Residues N119 and 127–129 each bind D-galactose; that span reads DKH.

As to quaternary structure, monomer in solution. Homodimer in solution. Exists as a monomer in solution when a low concentration (0.001 mg/ml) of it is present. Homodimers start to appear at a concentration of 0.01 mg/ml and tetramers at a concentration of 0.1 mg/ml. As to expression, highly expressed in mantle and to a lesser extent in muscle, hepatopancreas, gill and hemocytes.

Its activity is regulated as follows. Bacterial binding activity is inhibited by D-galactose. Hemagglutinating activity is independent of divalent cations Ca2(+) or Mg2(+). It is strongly inhibited by N-acetyl-D-galactosamine (GalNAc), D-galactose and D-talose, and to a lesser extent by melibiose and raffinose. Also inhibited by glycoprotein asialo-bovine submaxillary mucin (BSM). Not inhibited by D-glucose, D-fucose, D-galactitol, N-acetyl-D-glucosamine or lactose. Fungal binding activity is inhibited by D-galactose. Cytotoxic activity against Raji cell line is completely inhibited by galactose, melibiose and raffinose, but not by glucose or lactose. Galactose inhibits binding to laminin and BSM, but not to collagen, gelatin or fibronectin. Functionally, galactose-binding lectin. Binds both alpha and beta anomer of galactose (Gal), but has a stronger interaction with the glycans having alpha Gal at the non-reducing end and binds beta Gal weakly only in highly branched glycans. Has high affinity to Galalpha1-4Galbeta1-4GlcNAc. Binds N-acetyl-2-deoxy-2-amino-galactose (2-deoxy-GalNAc). Binds N-acetylgalactosamine (GalNAc). Binds porcine stomach mucin (PSM) with high affinity. Binds galactosamine. Binds laminin, bovine submaxillary mucin (BSM), fibronectin, type I collagen and gelatin with a decreasing affinity, respectively. Has hemagglutinating activity towards human type A erythrocytes. Also hemagglutinates human type 0, B and AB erythrocytes as well as rabbit and mouse erythrocytes. Agglutinates both Gram-positive and Gram-negative bacteria including B.subtilis ATCC 6633, S.aureus ATCC 21027 and E.coli 3254, respectively. No agglutination activity towards Gram-positive S.amurskyense CMM 3673. Has bacteriostatic activity on S.amurskyense CMM 3673, B.subtilis ATCC 6633, S.aureus ATCC 21027 and E.coli 3254. However, has no agglutination nor bacteriostatic activity on Gram-negative C.scophthalmum CIP 104199 or A.troitsensis KMM 3674. Inhibits growth of fungi from the genera Aspergillus, Penicillium, Trichoderma and st. Mycelia. Inhibits germination of spores and hyphal growth of them. Has dose-dependent cytotoxic effect on the human globotriaosylceramide (Gb3)-expressing Burkitt's lymphoma (Raji) cell line. Binds to Gb3 in these cells leading to activation of caspase-9/3 and PARP. Has dose-dependent cytotoxic effect on the Gb3-expressing human MCF-7 breast cancer cell line. No cytotoxic effect on myelogenous leukemia K562 cell line, which does not express Gb3. Activates immune responses in mice and increases cytokine production of TNF-alpha, IL-6 and MCP-1 in the serum and the peritoneal lavage of mice. Induces TNF-alpha and IL-6 secretion in mouse RAW264.7 macrophages, mouse bone marrow-derived macrophages, human THP-1 macrophages, human peripheral blood mononuclear cells (PBMCs) and human blood monocyte-derived macrophages. TNF-alpha production in macrophages could not be inhibited by GalNAc, GalN or Gal, indicating that induced cytokine production is separate from its sugar binding activity. Increases intracellular reactive oxygen species levels, expression and phosphorylation of protein kinases PKC alpha/delta, expression of COX-2 and NF-kappaB, and activates the MAPK pathway by increasing the phosphorylation of ERK1/2, JNK1/2 and p38 in mouse RAW264.7 macrophages. Induces endotoxin tolerance in lipopolysaccharide(LPS)-activated macrophages by down-regulating IRAK2 expression, reducing JNK1/2 phosphorylation and NF-kappaB activation. Can slightly increase the bactericidal activity of RAW264.7 macrophages. Has DNA-binding activity. Recognizes pathogen-associated molecular patterns (PAMPs) and binds to LPS from E.coli, but has only little binding to beta-1,3-glucan from E.gracilis and peptidoglycan from S.aureus. Activates secretion of TNF-alpha and IFN-gamma by the human peripheral blood cells (HPBCs). May be involved in innate immunity acting as an antibacterial and antifungal agent involved in the recognition and clearance of pathogens. The sequence is that of Galactose-binding lectin from Crenomytilus grayanus (Gray mussel).